A 554-amino-acid polypeptide reads, in one-letter code: Methyl-CpG-binding domain protein 4 (554 aa).

The tract at residues 1 to 23 (MESPNLGDNRVRGESLVPDPPWD) is disordered. Positions 63–135 (STTATEGHKP…EDFNFTVLPK (73 aa)) constitute an MBD domain. A compositionally biased stretch (polar residues) spans 154-164 (QPNETDVSKQN). Disordered regions lie at residues 154–195 (QPNE…SNSN) and 209–252 (DVDS…RKRA). Over residues 178 to 195 (LPSGTSESPESSGLSNSN) the composition is skewed to low complexity. Phosphoserine occurs at positions 296 and 402. Aspartate 534 is an active-site residue.

As to quaternary structure, interacts with MLH1.

The protein localises to the nucleus. Functionally, mismatch-specific DNA N-glycosylase involved in DNA repair. Has thymine glycosylase activity and is specific for G:T mismatches within methylated and unmethylated CpG sites. Can also remove uracil or 5-fluorouracil in G:U mismatches. Has no lyase activity. Was first identified as methyl-CpG-binding protein. This is Methyl-CpG-binding domain protein 4 (Mbd4) from Mus musculus (Mouse).